The sequence spans 252 residues: Imidazole glycerol phosphate synthase subunit HisF (252 aa).

Catalysis depends on residues Asp-11 and Asp-130.

Belongs to the HisA/HisF family. In terms of assembly, heterodimer of HisH and HisF.

The protein localises to the cytoplasm. The catalysed reaction is 5-[(5-phospho-1-deoxy-D-ribulos-1-ylimino)methylamino]-1-(5-phospho-beta-D-ribosyl)imidazole-4-carboxamide + L-glutamine = D-erythro-1-(imidazol-4-yl)glycerol 3-phosphate + 5-amino-1-(5-phospho-beta-D-ribosyl)imidazole-4-carboxamide + L-glutamate + H(+). It functions in the pathway amino-acid biosynthesis; L-histidine biosynthesis; L-histidine from 5-phospho-alpha-D-ribose 1-diphosphate: step 5/9. IGPS catalyzes the conversion of PRFAR and glutamine to IGP, AICAR and glutamate. The HisF subunit catalyzes the cyclization activity that produces IGP and AICAR from PRFAR using the ammonia provided by the HisH subunit. This Staphylococcus aureus (strain bovine RF122 / ET3-1) protein is Imidazole glycerol phosphate synthase subunit HisF.